Consider the following 73-residue polypeptide: Salivary thrombin inhibitor XC-42 (73 aa).

Positions 1–23 are cleaved as a signal peptide; that stretch reads MKLQFLFIFIAFCVMLFAQIATA.

Interacts with human F2 (thrombin). Salivary gland (at protein level).

Its subcellular location is the secreted. Its function is as follows. Acts as a competitive inhibitor of host thrombin. The chain is Salivary thrombin inhibitor XC-42 from Xenopsylla cheopis (Oriental rat flea).